The primary structure comprises 455 residues: Ribosomal protein uS12 methylthiotransferase RimO (455 aa).

The MTTase N-terminal domain maps to 21–131 (GKVGFISLGC…VVGAVHQYVP (111 aa)). [4Fe-4S] cluster contacts are provided by C30, C66, C95, C164, C168, and C171. In terms of domain architecture, Radical SAM core spans 150 to 387 (LTPRHYAYLK…MAKQAEISAA (238 aa)). A TRAM domain is found at 390–455 (QAKIGRTIDV…DEHDLWARLI (66 aa)).

The protein belongs to the methylthiotransferase family. RimO subfamily. Requires [4Fe-4S] cluster as cofactor.

The protein localises to the cytoplasm. The enzyme catalyses L-aspartate(89)-[ribosomal protein uS12]-hydrogen + (sulfur carrier)-SH + AH2 + 2 S-adenosyl-L-methionine = 3-methylsulfanyl-L-aspartate(89)-[ribosomal protein uS12]-hydrogen + (sulfur carrier)-H + 5'-deoxyadenosine + L-methionine + A + S-adenosyl-L-homocysteine + 2 H(+). Functionally, catalyzes the methylthiolation of an aspartic acid residue of ribosomal protein uS12. This is Ribosomal protein uS12 methylthiotransferase RimO from Marinobacter nauticus (strain ATCC 700491 / DSM 11845 / VT8) (Marinobacter aquaeolei).